We begin with the raw amino-acid sequence, 529 residues long: MSLNSSLSCRKELSNLTEEEGGEGGVIITQFIAIIVITIFVCLGNLVIVVTLYKKSYLLTLSNKFVFSLTLSNFLLSVLVLPFVVTSSIRREWIFGVVWCNFSALLYLLISSASMLTLGVIAIDRYYAVLYPMVYPMKITGNRAVMALVYIWLHSLIGCLPPLFGWSSVEFDEFKWMCVAAWHREPGYTAFWQIWCALFPFLVMLVCYGFIFRVARVKARKVHCGTVVIVEEDAQRTGRKNSSTSTSSSGSRRNAFQGVVYSANQCKALITILVVLGAFMVTWGPYMVVIASEALWGKSSVSPSLETWATWLSFASAVCHPLIYGLWNKTVRKELLGMCFGDRYYREPFVQRQRTSRLFSISNRITDLGLSPHLTALMAGGQPLGHSSSTGDTGFSCSQDSGTDMMLLEDYTSDDNPPSHCTCPPKRRSSVTFEDEVEQIKEAAKNSILHVKAEVHKSLDSYAASLAKAIEAEAKINLFGEEALPGVLVTARTVPGGGFGGRRGSRTLVSQRLQLQSIEEGDVLAAEQR.

The Extracellular segment spans residues 1–30 (MSLNSSLSCRKELSNLTEEEGGEGGVIITQ). Residues Asn4 and Asn15 are each glycosylated (N-linked (GlcNAc...) asparagine). The chain crosses the membrane as a helical span at residues 31-51 (FIAIIVITIFVCLGNLVIVVT). Over 52–64 (LYKKSYLLTLSNK) the chain is Cytoplasmic. A helical transmembrane segment spans residues 65–85 (FVFSLTLSNFLLSVLVLPFVV). Topologically, residues 86–101 (TSSIRREWIFGVVWCN) are extracellular. Cys100 and Cys178 form a disulfide bridge. Residues 102–123 (FSALLYLLISSASMLTLGVIAI) traverse the membrane as a helical segment. Residues 124–143 (DRYYAVLYPMVYPMKITGNR) lie on the Cytoplasmic side of the membrane. A helical membrane pass occupies residues 144–164 (AVMALVYIWLHSLIGCLPPLF). Topologically, residues 165 to 190 (GWSSVEFDEFKWMCVAAWHREPGYTA) are extracellular. A helical membrane pass occupies residues 191–211 (FWQIWCALFPFLVMLVCYGFI). Topologically, residues 212–269 (FRVARVKARKVHCGTVVIVEEDAQRTGRKNSSTSTSSSGSRRNAFQGVVYSANQCKAL) are cytoplasmic. A helical membrane pass occupies residues 270–290 (ITILVVLGAFMVTWGPYMVVI). Residues 291-306 (ASEALWGKSSVSPSLE) are Extracellular-facing. Residues 307–327 (TWATWLSFASAVCHPLIYGLW) form a helical membrane-spanning segment. Over 328-529 (NKTVRKELLG…EGDVLAAEQR (202 aa)) the chain is Cytoplasmic.

Belongs to the G-protein coupled receptor 1 family.

It is found in the cell projection. The protein localises to the cilium membrane. It localises to the cell membrane. In terms of biological role, key negative regulator of Shh signaling, which promotes the processing of GLI3 into GLI3R during neural tube development. Recruited by TULP3 and the IFT-A complex to primary cilia and acts as a regulator of the PKA-dependent basal repression machinery in Shh signaling by increasing cAMP levels, leading to promote the PKA-dependent processing of GLI3 into GLI3R and repress the Shh signaling. In presence of SHH, it is removed from primary cilia and is internalized into recycling endosomes, preventing its activity and allowing activation of the Shh signaling. Its ligand is unknown. The protein is G-protein coupled receptor 161 (GPR161) of Homo sapiens (Human).